The chain runs to 376 residues: Carbamoyl phosphate synthase small chain (376 aa).

The tract at residues 1-187 (MKALLALEDG…KEDGSFLWKQ (187 aa)) is CPSase. Positions 45, 239, and 241 each coordinate L-glutamine. The Glutamine amidotransferase type-1 domain maps to 189–376 (KIPLIVYDYG…KEVVLLKLGC (188 aa)). The Nucleophile role is filled by Cys-266. Residues Leu-267, Gln-270, Asn-308, Gly-310, and Phe-311 each coordinate L-glutamine. Catalysis depends on residues His-349 and Glu-351.

It belongs to the CarA family. In terms of assembly, composed of two chains; the small (or glutamine) chain promotes the hydrolysis of glutamine to ammonia, which is used by the large (or ammonia) chain to synthesize carbamoyl phosphate. Tetramer of heterodimers (alpha,beta)4.

The catalysed reaction is hydrogencarbonate + L-glutamine + 2 ATP + H2O = carbamoyl phosphate + L-glutamate + 2 ADP + phosphate + 2 H(+). The enzyme catalyses L-glutamine + H2O = L-glutamate + NH4(+). It functions in the pathway amino-acid biosynthesis; L-arginine biosynthesis; carbamoyl phosphate from bicarbonate: step 1/1. The protein operates within pyrimidine metabolism; UMP biosynthesis via de novo pathway; (S)-dihydroorotate from bicarbonate: step 1/3. Small subunit of the glutamine-dependent carbamoyl phosphate synthetase (CPSase). CPSase catalyzes the formation of carbamoyl phosphate from the ammonia moiety of glutamine, carbonate, and phosphate donated by ATP, constituting the first step of 2 biosynthetic pathways, one leading to arginine and/or urea and the other to pyrimidine nucleotides. The small subunit (glutamine amidotransferase) binds and cleaves glutamine to supply the large subunit with the substrate ammonia. The protein is Carbamoyl phosphate synthase small chain of Lawsonia intracellularis (strain PHE/MN1-00).